The chain runs to 278 residues: Bifunctional protein FolD (278 aa).

Residues 165–167 (GRS) and serine 190 each bind NADP(+).

The protein belongs to the tetrahydrofolate dehydrogenase/cyclohydrolase family. As to quaternary structure, homodimer.

The enzyme catalyses (6R)-5,10-methylene-5,6,7,8-tetrahydrofolate + NADP(+) = (6R)-5,10-methenyltetrahydrofolate + NADPH. The catalysed reaction is (6R)-5,10-methenyltetrahydrofolate + H2O = (6R)-10-formyltetrahydrofolate + H(+). It functions in the pathway one-carbon metabolism; tetrahydrofolate interconversion. In terms of biological role, catalyzes the oxidation of 5,10-methylenetetrahydrofolate to 5,10-methenyltetrahydrofolate and then the hydrolysis of 5,10-methenyltetrahydrofolate to 10-formyltetrahydrofolate. The protein is Bifunctional protein FolD of Clostridium tetani (strain Massachusetts / E88).